Here is a 147-residue protein sequence, read N- to C-terminus: Sec-independent protein translocase protein TatB (147 aa).

The chain crosses the membrane as a helical span at residues 1 to 21; the sequence is MFDVSFTELMVIGVIALVVIG. Residues 67 to 147 are disordered; that stretch reads DETARSMQTS…DKTPPTGSAT (81 aa). The span at 93–103 shows a compositional bias: basic and acidic residues; the sequence is AELDDTARDAS. Composition is skewed to low complexity over residues 109-120 and 129-147; these read ADAPAEPAPAVA and APPA…GSAT.

This sequence belongs to the TatB family. In terms of assembly, the Tat system comprises two distinct complexes: a TatABC complex, containing multiple copies of TatA, TatB and TatC subunits, and a separate TatA complex, containing only TatA subunits. Substrates initially bind to the TatABC complex, which probably triggers association of the separate TatA complex to form the active translocon.

It is found in the cell inner membrane. Part of the twin-arginine translocation (Tat) system that transports large folded proteins containing a characteristic twin-arginine motif in their signal peptide across membranes. Together with TatC, TatB is part of a receptor directly interacting with Tat signal peptides. TatB may form an oligomeric binding site that transiently accommodates folded Tat precursor proteins before their translocation. The polypeptide is Sec-independent protein translocase protein TatB (Bordetella pertussis (strain Tohama I / ATCC BAA-589 / NCTC 13251)).